A 282-amino-acid polypeptide reads, in one-letter code: sn-glycerol-3-phosphate transport system permease protein UgpE (282 aa).

6 consecutive transmembrane segments (helical) span residues 14-34 (LILI…FVAS), 86-106 (MAIA…IVFF), 112-132 (MFFF…RILP), 146-168 (YAGL…QFFL), 201-221 (IAAL…WPLL), and 248-268 (WNYV…VVVL). An ABC transmembrane type-1 domain is found at 78 to 269 (LWNSFVVAMA…IPLILVVVLM (192 aa)).

It belongs to the binding-protein-dependent transport system permease family. As to quaternary structure, the complex is composed of two ATP-binding proteins (UgpC), two transmembrane proteins (UgpA and UgpE) and a solute-binding protein (UgpB).

Its subcellular location is the cell inner membrane. In terms of biological role, part of the ABC transporter complex UgpBAEC involved in sn-glycerol-3-phosphate (G3P) import. Probably responsible for the translocation of the substrate across the membrane. The chain is sn-glycerol-3-phosphate transport system permease protein UgpE (ugpE) from Brucella abortus (strain 2308).